A 581-amino-acid polypeptide reads, in one-letter code: Transcription activator GAGA (581 aa).

The 66-residue stretch at 34 to 99 (VDCTLAAGGR…VYRGEVSVDH (66 aa)) folds into the BTB domain. Positions 201–397 (VIQAFLPARK…SSGSGSGALS (197 aa)) are interaction with E(bx). T237 carries the post-translational modification Phosphothreonine. 2 disordered regions span residues 298 to 343 (ITPA…EQPA) and 364 to 404 (LRHF…SVPQ). A C2H2-type; degenerate zinc finger spans residues 343 to 366 (ATCPICYAVIRQSRNLRRHLELRH). Residues 381 to 401 (GKKSSSGSSGSGSGALSSSGS) show a composition bias toward low complexity.

As to quaternary structure, interacts with Bin1, lolal, corto, ttk and ph-p. Interacts with FACT subunits Ssrp and dre4/SPT16. Interacts with E(bx). Upon ecdysone stimulation, interacts with Nup98. The N-terminus is blocked. In terms of tissue distribution, expressed in the central nervous system throughout development.

The protein localises to the nucleus. The protein resides in the chromosome. Its function is as follows. Transcriptional activator that functions by regulating chromatin structure. Overcomes the repressive effects of chromatin by promoting the open chromatin conformation in promoter gene regions, thereby allowing access to other transcription factors. Binds to DNA Polycomb response elements (PREs) at the bithorax complex and to the proximal region of the engrailed promoter, and positively regulates transcription of many genes including homeotic ones. Involved in zygotic genome activation (ZGA), a critical event in early embryonic development during which the developmental control passes from maternally provided mRNAs to the expression of the zygotic genome after fertilization. Binds to the DNA sequence (GA)n, with optimal binding to the pentamer 5'-GAGAG-3'. Binds DNA as an oligomer. May also act as a transcriptional repressor, maintaining the repressed state of genes including lolal, and down-regulating its own transcription. Required for dosage compensation in males and may be involved in oogenesis. Also has a role in nuclear division. The protein is Transcription activator GAGA (Trl) of Drosophila melanogaster (Fruit fly).